Here is a 310-residue protein sequence, read N- to C-terminus: Glutaminase (310 aa).

Substrate contacts are provided by Ser67, Asn118, Glu161, Asn168, Tyr192, Tyr244, and Val262.

It belongs to the glutaminase family. Homotetramer.

It catalyses the reaction L-glutamine + H2O = L-glutamate + NH4(+). This chain is Glutaminase, found in Legionella pneumophila subsp. pneumophila (strain Philadelphia 1 / ATCC 33152 / DSM 7513).